Consider the following 373-residue polypeptide: MSDNSKTRVVVGMSGGVDSSVTALLLKEQGYDVIGIFMKNWDDTDENGVCTATEDYKDVVAVADQIGIPYYSVNFEKEYWDRVFEYFLAEYRAGRTPNPDVMCNKEIKFKAFLDYAITLGADYVATGHYARVVRDEDGTVHMLRGVDNGKDQTYFLSQLSQEQLQKTMFPLGHLEKPEVRKLAEEAGLSTAKKKDSTGICFIGEKNFKNFLSNYLPAQPGRMMTVDGRDMGEHAGLMYYTIGQRGGLGIGGQHGGDNAPWFVVGKALSKNILYVGQGFYHDSLMSTSLEASQVHFTCDMPEEFTLECTAKFRYRQPDSKVTVHVKGDKAEVIFAEPQRAITPGQAVVFYDGEECLGGGLIDNAYRDGQVCQYI.

Residues G12–S19 and M38 each bind ATP. Positions N98–D100 are interaction with target base in tRNA. C103 serves as the catalytic Nucleophile. An intrachain disulfide couples C103 to C200. G127 provides a ligand contact to ATP. The interval K150 to Q152 is interaction with tRNA. Residue C200 is the Cysteine persulfide intermediate of the active site. An interaction with tRNA region spans residues R312 to Y313.

It belongs to the MnmA/TRMU family.

Its subcellular location is the cytoplasm. It carries out the reaction S-sulfanyl-L-cysteinyl-[protein] + uridine(34) in tRNA + AH2 + ATP = 2-thiouridine(34) in tRNA + L-cysteinyl-[protein] + A + AMP + diphosphate + H(+). Its function is as follows. Catalyzes the 2-thiolation of uridine at the wobble position (U34) of tRNA, leading to the formation of s(2)U34. The chain is tRNA-specific 2-thiouridylase MnmA from Streptococcus pneumoniae (strain JJA).